We begin with the raw amino-acid sequence, 326 residues long: MALTEQKRVRLEKLSDENGIISALAFDQRGALKRLMVKHQTEEPTVAQMEELKVLVADELTKYASSMLLDPEYGLPATKALDEKAGLLLAYEKTGYDTTSTKRLPDCLDVWSAKRIKEEGADAVKFLLYYDVDSSDELNQEKQAYIERIGSECVAEDIPFFLEILAYDEKIADAGSVEYAKVKPHKVIGAMKVFSDPRFNIDVLKVEVPVNIKYVEGFAEGEVVYTREEAAAFFKAQDEATNLPYIYLSAGVSAKLFQDTLVFAHESGANFNGVLCGRATWAGSVEAYIKDGEAAARECVRTTGFENIDELNKVLQRTATSWKERV.

This sequence belongs to the aldolase LacD family.

The catalysed reaction is D-tagatofuranose 1,6-bisphosphate = D-glyceraldehyde 3-phosphate + dihydroxyacetone phosphate. The protein operates within carbohydrate metabolism; D-tagatose 6-phosphate degradation; D-glyceraldehyde 3-phosphate and glycerone phosphate from D-tagatose 6-phosphate: step 2/2. In Streptococcus pneumoniae serotype 4 (strain ATCC BAA-334 / TIGR4), this protein is Tagatose 1,6-diphosphate aldolase.